A 480-amino-acid polypeptide reads, in one-letter code: tRNA-2-methylthio-N(6)-dimethylallyladenosine synthase (480 aa).

An MTTase N-terminal domain is found at 29–145; sequence GSFWIQTFGC…LEALLTQVDN (117 aa). [4Fe-4S] cluster contacts are provided by Cys38, Cys74, Cys108, Cys180, Cys184, and Cys187. Positions 166-403 constitute a Radical SAM core domain; that stretch reads RDSTICAWVN…NALVERVALQ (238 aa). The TRAM domain maps to 406 to 474; sequence SRYSGKVEQV…AFSLSGTPCD (69 aa).

It belongs to the methylthiotransferase family. MiaB subfamily. In terms of assembly, monomer. [4Fe-4S] cluster serves as cofactor.

The protein resides in the cytoplasm. The catalysed reaction is N(6)-dimethylallyladenosine(37) in tRNA + (sulfur carrier)-SH + AH2 + 2 S-adenosyl-L-methionine = 2-methylsulfanyl-N(6)-dimethylallyladenosine(37) in tRNA + (sulfur carrier)-H + 5'-deoxyadenosine + L-methionine + A + S-adenosyl-L-homocysteine + 2 H(+). In terms of biological role, catalyzes the methylthiolation of N6-(dimethylallyl)adenosine (i(6)A), leading to the formation of 2-methylthio-N6-(dimethylallyl)adenosine (ms(2)i(6)A) at position 37 in tRNAs that read codons beginning with uridine. The chain is tRNA-2-methylthio-N(6)-dimethylallyladenosine synthase from Prochlorococcus marinus (strain MIT 9303).